The following is a 305-amino-acid chain: Phosphoribosylaminoimidazole-succinocarboxamide synthase (305 aa).

Belongs to the SAICAR synthetase family.

It carries out the reaction 5-amino-1-(5-phospho-D-ribosyl)imidazole-4-carboxylate + L-aspartate + ATP = (2S)-2-[5-amino-1-(5-phospho-beta-D-ribosyl)imidazole-4-carboxamido]succinate + ADP + phosphate + 2 H(+). It functions in the pathway purine metabolism; IMP biosynthesis via de novo pathway; 5-amino-1-(5-phospho-D-ribosyl)imidazole-4-carboxamide from 5-amino-1-(5-phospho-D-ribosyl)imidazole-4-carboxylate: step 1/2. The polypeptide is Phosphoribosylaminoimidazole-succinocarboxamide synthase (Tropheryma whipplei (strain TW08/27) (Whipple's bacillus)).